The primary structure comprises 413 residues: THAP domain-containing protein 5 (413 aa).

A THAP-type zinc finger spans residues methionine 1–phenylalanine 85. The tract at residues isoleucine 84–lysine 118 is disordered. Residues glutamate 102–lysine 118 are compositionally biased toward basic and acidic residues. Residues arginine 375–isoleucine 399 are a coiled coil.

Its subcellular location is the nucleus. This chain is THAP domain-containing protein 5 (THAP5), found in Gallus gallus (Chicken).